A 443-amino-acid polypeptide reads, in one-letter code: ATP-dependent protease ATPase subunit HslU (443 aa).

Residues isoleucine 18 and 60-65 (GVGKTE) contribute to the ATP site. The interval 137–156 (PPPRDAWGQNEQSEDTSNTR) is disordered. A compositionally biased stretch (polar residues) spans 145–156 (QNEQSEDTSNTR). ATP contacts are provided by aspartate 256, glutamate 321, and arginine 393.

Belongs to the ClpX chaperone family. HslU subfamily. In terms of assembly, a double ring-shaped homohexamer of HslV is capped on each side by a ring-shaped HslU homohexamer. The assembly of the HslU/HslV complex is dependent on binding of ATP.

The protein resides in the cytoplasm. ATPase subunit of a proteasome-like degradation complex; this subunit has chaperone activity. The binding of ATP and its subsequent hydrolysis by HslU are essential for unfolding of protein substrates subsequently hydrolyzed by HslV. HslU recognizes the N-terminal part of its protein substrates and unfolds these before they are guided to HslV for hydrolysis. The polypeptide is ATP-dependent protease ATPase subunit HslU (Vibrio vulnificus (strain YJ016)).